Reading from the N-terminus, the 202-residue chain is Putative 3-methyladenine DNA glycosylase (202 aa).

It belongs to the DNA glycosylase MPG family.

The polypeptide is Putative 3-methyladenine DNA glycosylase (Rhodopseudomonas palustris (strain BisB5)).